A 359-amino-acid polypeptide reads, in one-letter code: MTKRILVLEDGTVFEGKAFGADIDVTGEIVFNTGMTGYQESITDQSYNGQILTFTYPLVGNYGINRDDYESIIPTCKGVVVFEEARRASNWRNQMTLDEFLKAKKIPGISGIDTRALTKIIRKHGTMRATLTHVGDSMDHVTDQLQATVLPTDNIKQVSTKTSYPAPGVGLSVVLVDFGLKHSILRELSKRNCNVTVVPYSTTAEEILHLNPDGVMLSNGPGNPEDVPQALDMIRGVQGKIPIFGICMGHQLFAMANGAKTYKMKFGHRGFNHAVREIATGRVDFTSQNHGYAVSREDLPEHLIITHEEINDKSVEGVRHRYQPAFSVQYHPDAAPGPHDASYLFDEFIEMMEVFKQSN.

Residues 1-169 (MTKRILVLED…TKTSYPAPGV (169 aa)) form a CPSase region. L-glutamine-binding residues include serine 46, glycine 220, and glycine 222. Residues 172–358 (SVVLVDFGLK…IEMMEVFKQS (187 aa)) form the Glutamine amidotransferase type-1 domain. Cysteine 247 serves as the catalytic Nucleophile. L-glutamine is bound by residues methionine 248, glutamine 251, asparagine 289, glycine 291, and tyrosine 292. Active-site residues include histidine 331 and aspartate 333.

The protein belongs to the CarA family. Composed of two chains; the small (or glutamine) chain promotes the hydrolysis of glutamine to ammonia, which is used by the large (or ammonia) chain to synthesize carbamoyl phosphate. Tetramer of heterodimers (alpha,beta)4.

The enzyme catalyses hydrogencarbonate + L-glutamine + 2 ATP + H2O = carbamoyl phosphate + L-glutamate + 2 ADP + phosphate + 2 H(+). The catalysed reaction is L-glutamine + H2O = L-glutamate + NH4(+). Its pathway is amino-acid biosynthesis; L-arginine biosynthesis; carbamoyl phosphate from bicarbonate: step 1/1. The protein operates within pyrimidine metabolism; UMP biosynthesis via de novo pathway; (S)-dihydroorotate from bicarbonate: step 1/3. Its function is as follows. Small subunit of the glutamine-dependent carbamoyl phosphate synthetase (CPSase). CPSase catalyzes the formation of carbamoyl phosphate from the ammonia moiety of glutamine, carbonate, and phosphate donated by ATP, constituting the first step of 2 biosynthetic pathways, one leading to arginine and/or urea and the other to pyrimidine nucleotides. The small subunit (glutamine amidotransferase) binds and cleaves glutamine to supply the large subunit with the substrate ammonia. In Streptococcus pneumoniae (strain ATCC BAA-255 / R6), this protein is Carbamoyl phosphate synthase small chain.